Consider the following 178-residue polypeptide: MSRIGNKVIVIPAGVSVEVNGATVTVKGPKGELVRSFNENITLDIAENEITVKRPNDTKEMKMLHGTTRALLANMVEGVSTGFSKALEMIGVGYRAQLQGTKLVLSVGKSHQDEVEAPENIKFVVATPTSIVVEGISKEAVGQTAAYIRSRRSPEPYKGKGIRYVGEYVRRKEGKTGK.

This sequence belongs to the universal ribosomal protein uL6 family. In terms of assembly, part of the 50S ribosomal subunit.

Its function is as follows. This protein binds to the 23S rRNA, and is important in its secondary structure. It is located near the subunit interface in the base of the L7/L12 stalk, and near the tRNA binding site of the peptidyltransferase center. This chain is Large ribosomal subunit protein uL6, found in Lactococcus lactis subsp. lactis (strain IL1403) (Streptococcus lactis).